The chain runs to 307 residues: Ribosomal RNA small subunit methyltransferase H (307 aa).

S-adenosyl-L-methionine is bound by residues 31 to 33 (GGH), Asp51, Tyr83, Asp97, and Gln104.

The protein belongs to the methyltransferase superfamily. RsmH family.

Its subcellular location is the cytoplasm. The enzyme catalyses cytidine(1402) in 16S rRNA + S-adenosyl-L-methionine = N(4)-methylcytidine(1402) in 16S rRNA + S-adenosyl-L-homocysteine + H(+). Specifically methylates the N4 position of cytidine in position 1402 (C1402) of 16S rRNA. This is Ribosomal RNA small subunit methyltransferase H from Buchnera aphidicola subsp. Cinara cedri (strain Cc).